The primary structure comprises 426 residues: Enolase 2 (426 aa).

Q163 contacts (2R)-2-phosphoglycerate. E205 functions as the Proton donor in the catalytic mechanism. Positions 242, 285, and 312 each coordinate Mg(2+). Residues K337, R366, S367, and K388 each contribute to the (2R)-2-phosphoglycerate site. Residue K337 is the Proton acceptor of the active site.

It belongs to the enolase family. It depends on Mg(2+) as a cofactor.

It is found in the cytoplasm. The protein localises to the secreted. Its subcellular location is the cell surface. It catalyses the reaction (2R)-2-phosphoglycerate = phosphoenolpyruvate + H2O. The protein operates within carbohydrate degradation; glycolysis; pyruvate from D-glyceraldehyde 3-phosphate: step 4/5. In terms of biological role, catalyzes the reversible conversion of 2-phosphoglycerate (2-PG) into phosphoenolpyruvate (PEP). It is essential for the degradation of carbohydrates via glycolysis. The chain is Enolase 2 from Methanospirillum hungatei JF-1 (strain ATCC 27890 / DSM 864 / NBRC 100397 / JF-1).